The sequence spans 490 residues: ATP synthase subunit beta, chloroplastic (490 aa).

Residue 170-177 participates in ATP binding; that stretch reads GGAGVGKT.

The protein belongs to the ATPase alpha/beta chains family. In terms of assembly, F-type ATPases have 2 components, CF(1) - the catalytic core - and CF(0) - the membrane proton channel. CF(1) has five subunits: alpha(3), beta(3), gamma(1), delta(1), epsilon(1). CF(0) has four main subunits: a(1), b(1), b'(1) and c(9-12).

Its subcellular location is the plastid. It localises to the chloroplast thylakoid membrane. The catalysed reaction is ATP + H2O + 4 H(+)(in) = ADP + phosphate + 5 H(+)(out). Its function is as follows. Produces ATP from ADP in the presence of a proton gradient across the membrane. The catalytic sites are hosted primarily by the beta subunits. The sequence is that of ATP synthase subunit beta, chloroplastic from Ipomoea aquatica (Water spinach).